We begin with the raw amino-acid sequence, 512 residues long: MSQDQPIVLDPTYASFDAAARPADLGATHFIGIGGAGMSVLAEMLHAEGVAVDGSDRAHSAKTDRLETLGITVEFGQRAENVAQAETVVYSSAIKPDNPEIVAAHAAGKRIVHRSDILALLMNGKRAVTVAGAHGKTTTSSMLSHILVNAGADPSYAIGGFIQGPDGTTLDGGHAGKGDILVAEADESDGSFAKYHPTIAIITNCEADHLDHYGDEAHYRAAFVAHAGRATGHVIISIDDPDGLAVLEALPADVKSHTVAYGTTARESLPDLGGAAYVWIASESETAGSGVEQLTLHLPAAVTAGEPVSQSVALKVPGVHNARNAAAAISAAVLLGVSPADAANAAGTFLGAARRFQVRGTVKQVTVVDDYAHHPTEIAALLDAARRRYPDSTIRVIFQPHLFSRTKFFAHQFAKSLAKADDVIITGIFPAREKQADFPDISPSTIVDAAAGLKDASAGTWIQPVEDMCLAAKMMAMRAHHGDVIFTVGAGDITDMDQVLLTALEAHRESCE.

132-138 (GAHGKTT) contacts ATP.

The protein belongs to the MurCDEF family.

Its subcellular location is the cytoplasm. It carries out the reaction UDP-N-acetyl-alpha-D-muramate + L-alanine + ATP = UDP-N-acetyl-alpha-D-muramoyl-L-alanine + ADP + phosphate + H(+). It functions in the pathway cell wall biogenesis; peptidoglycan biosynthesis. In terms of biological role, cell wall formation. This Bifidobacterium longum (strain DJO10A) protein is UDP-N-acetylmuramate--L-alanine ligase.